The primary structure comprises 243 residues: NAD-dependent protein deacetylase (243 aa).

The Deacetylase sirtuin-type domain occupies 1-243 (MRNDLETLKH…VSVVKSLMTE (243 aa)). Residues Ala24, Phe35, Arg36, Gln105, Ile107, Asp108, and His123 each contribute to the NAD(+) site. Nicotinamide is bound at residue Phe35. Nicotinamide contacts are provided by Ile107 and Asp108. His123 serves as the catalytic Proton acceptor. Zn(2+) is bound by residues Cys131, Cys134, Cys151, and Cys154. NAD(+) contacts are provided by Ser192, Ser193, Asn215, and Asp232.

This sequence belongs to the sirtuin family. Class U subfamily. Requires Zn(2+) as cofactor.

The protein resides in the cytoplasm. It catalyses the reaction N(6)-acetyl-L-lysyl-[protein] + NAD(+) + H2O = 2''-O-acetyl-ADP-D-ribose + nicotinamide + L-lysyl-[protein]. NAD-dependent protein deacetylase which modulates the activities of several enzymes which are inactive in their acetylated form. This is NAD-dependent protein deacetylase from Staphylococcus aureus (strain MSSA476).